The sequence spans 151 residues: Ribosomal RNA large subunit methyltransferase H (151 aa).

Residues L73, G100, and 119–124 (LSDLTM) contribute to the S-adenosyl-L-methionine site.

It belongs to the RNA methyltransferase RlmH family. As to quaternary structure, homodimer.

The protein resides in the cytoplasm. The enzyme catalyses pseudouridine(1915) in 23S rRNA + S-adenosyl-L-methionine = N(3)-methylpseudouridine(1915) in 23S rRNA + S-adenosyl-L-homocysteine + H(+). In terms of biological role, specifically methylates the pseudouridine at position 1915 (m3Psi1915) in 23S rRNA. The chain is Ribosomal RNA large subunit methyltransferase H from Aliarcobacter butzleri (strain RM4018) (Arcobacter butzleri).